We begin with the raw amino-acid sequence, 193 residues long: Potassium-transporting ATPase KdpC subunit (193 aa).

Residues 7-27 traverse the membrane as a helical segment; the sequence is PMIVIFAVLAALTGLAYPAVM.

This sequence belongs to the KdpC family. The system is composed of three essential subunits: KdpA, KdpB and KdpC.

The protein localises to the cell inner membrane. Its function is as follows. Part of the high-affinity ATP-driven potassium transport (or Kdp) system, which catalyzes the hydrolysis of ATP coupled with the electrogenic transport of potassium into the cytoplasm. This subunit acts as a catalytic chaperone that increases the ATP-binding affinity of the ATP-hydrolyzing subunit KdpB by the formation of a transient KdpB/KdpC/ATP ternary complex. This is Potassium-transporting ATPase KdpC subunit from Paraburkholderia phymatum (strain DSM 17167 / CIP 108236 / LMG 21445 / STM815) (Burkholderia phymatum).